We begin with the raw amino-acid sequence, 552 residues long: MAGUK p55 subfamily member 2 (552 aa).

L27 domains lie at 8 to 59 (SESA…EETK) and 60 to 118 (LEAV…YETP). A Phosphoserine modification is found at S42. T117 is subject to Phosphothreonine. Position 121 is a phosphoserine (S121). The 80-residue stretch at 140–219 (MVGIRKTAGE…SVILKILPSY (80 aa)) folds into the PDZ domain. In terms of domain architecture, SH3 spans 225–293 (PRQVFVKCHF…PSQLLEEKRK (69 aa)). In terms of domain architecture, Guanylate kinase-like spans 350 to 537 (RKTLVLIGAQ…TFRELQTAME (188 aa)).

The protein belongs to the MAGUK family. As to quaternary structure, can homomultimerise. Interacts with CACNG2. Interacts (via the SH3-Guanylate kinase-like sub-module) with DLG4/PSD95 and DLGAP1/GKAP. Interacts (via the PDZ domain) with CADM1 (via C-terminus). Interacts with KCNN2/SK2 (via N-terminal domain). Interacts with SRC. In terms of processing, phosphorylated by SRC. As to expression, expressed in pyramidal neurons of CA1 region of the hippocampus.

It localises to the cell projection. The protein localises to the dendrite. Its subcellular location is the postsynaptic density. The protein resides in the cytoplasm. It is found in the cytoskeleton. It localises to the membrane. In terms of biological role, postsynaptic MAGUK scaffold protein that links CADM1 cell adhesion molecules to core components of the postsynaptic density. In CA1 pyramidal neurons, required for synaptic KCNN2-containing channel function and long-term potentiation expression. Seems to negatively regulate SRC function in epithelial cells. This is MAGUK p55 subfamily member 2 from Mus musculus (Mouse).